A 116-amino-acid polypeptide reads, in one-letter code: Iron-sulfur cluster insertion protein ErpA (116 aa).

Positions 44, 108, and 110 each coordinate iron-sulfur cluster.

This sequence belongs to the HesB/IscA family. In terms of assembly, homodimer. Requires iron-sulfur cluster as cofactor.

In terms of biological role, required for insertion of 4Fe-4S clusters for at least IspG. The protein is Iron-sulfur cluster insertion protein ErpA of Shewanella baltica (strain OS223).